Here is a 1067-residue protein sequence, read N- to C-terminus: Isoleucine--tRNA ligase (1067 aa).

The short motif at 49 to 59 (PYVSGAIHLGT) is the 'HIGH' region element. The 'KMSKS' region signature appears at 625-629 (KMSKS). K628 is an ATP binding site.

The protein belongs to the class-I aminoacyl-tRNA synthetase family. IleS type 2 subfamily. As to quaternary structure, monomer. Zn(2+) serves as cofactor.

The protein localises to the cytoplasm. It catalyses the reaction tRNA(Ile) + L-isoleucine + ATP = L-isoleucyl-tRNA(Ile) + AMP + diphosphate. In terms of biological role, catalyzes the attachment of isoleucine to tRNA(Ile). As IleRS can inadvertently accommodate and process structurally similar amino acids such as valine, to avoid such errors it has two additional distinct tRNA(Ile)-dependent editing activities. One activity is designated as 'pretransfer' editing and involves the hydrolysis of activated Val-AMP. The other activity is designated 'posttransfer' editing and involves deacylation of mischarged Val-tRNA(Ile). The sequence is that of Isoleucine--tRNA ligase from Pyrococcus abyssi (strain GE5 / Orsay).